A 100-amino-acid polypeptide reads, in one-letter code: NADH-quinone oxidoreductase subunit K (100 aa).

Helical transmembrane passes span 2–22 (IGLS…LMGV), 29–49 (LMLF…FAAI), and 63–83 (FFII…LIVL).

It belongs to the complex I subunit 4L family. In terms of assembly, NDH-1 is composed of 14 different subunits. Subunits NuoA, H, J, K, L, M, N constitute the membrane sector of the complex.

Its subcellular location is the cell inner membrane. The catalysed reaction is a quinone + NADH + 5 H(+)(in) = a quinol + NAD(+) + 4 H(+)(out). In terms of biological role, NDH-1 shuttles electrons from NADH, via FMN and iron-sulfur (Fe-S) centers, to quinones in the respiratory chain. The immediate electron acceptor for the enzyme in this species is believed to be ubiquinone. Couples the redox reaction to proton translocation (for every two electrons transferred, four hydrogen ions are translocated across the cytoplasmic membrane), and thus conserves the redox energy in a proton gradient. The chain is NADH-quinone oxidoreductase subunit K from Sulfurovum sp. (strain NBC37-1).